We begin with the raw amino-acid sequence, 621 residues long: DNA mismatch repair protein MutL (621 aa).

It belongs to the DNA mismatch repair MutL/HexB family.

Functionally, this protein is involved in the repair of mismatches in DNA. It is required for dam-dependent methyl-directed DNA mismatch repair. May act as a 'molecular matchmaker', a protein that promotes the formation of a stable complex between two or more DNA-binding proteins in an ATP-dependent manner without itself being part of a final effector complex. The chain is DNA mismatch repair protein MutL from Petrotoga mobilis (strain DSM 10674 / SJ95).